A 148-amino-acid polypeptide reads, in one-letter code: Leghemoglobin 3 (148 aa).

Residues 2–148 (GFTEKQEALV…LSAAIKKAMS (147 aa)) form the Globin domain. Nitrated tyrosine is present on Y30. S45 lines the heme b pocket. At S45 the chain carries Phosphoserine. H63 contributes to the O2 binding site. The heme b site is built by K66, H95, and K98. Y136 is subject to Nitrated tyrosine.

It belongs to the plant globin family. As to quaternary structure, monomer. Post-translationally, nitrated in effective nodules and particularly in hypoxic conditions; this mechanism may play a protective role in the symbiosis by buffering toxic peroxynitrite NO(2)(-). Nitration level decrease during nodule senescence. In terms of processing, phosphorylation at Ser-45 disrupts the molecular environment of its porphyrin ring oxygen binding pocket, thus leading to a reduced oxygen consumption and to the delivery of oxygen O(2) to symbiosomes. As to expression, stem nodules.

The protein localises to the cytoplasm. It localises to the cytosol. Its subcellular location is the nucleus. Its function is as follows. Leghemoglobin that reversibly binds oxygen O(2) through a pentacoordinated heme iron. In stem nodules, facilitates the diffusion of oxygen to the bacteroids while preventing the bacterial nitrogenase from being inactivated by buffering dioxygen, nitric oxide and carbon monoxide, and promoting the formation of reactive oxygen species (ROS, e.g. H(2)O(2)). This role is essential for symbiotic nitrogen fixation (SNF). This Sesbania rostrata protein is Leghemoglobin 3.